A 603-amino-acid chain; its full sequence is uncharacterized protein (603 aa).

Positions 4-79 (YRIRVTTVDQ…VTFHLVIAVF (76 aa)) constitute a Ubiquitin-like domain. Disordered regions lie at residues 85 to 121 (TLPS…PEEL), 159 to 178 (SLPT…NSVS), and 206 to 348 (AQES…NQPF). 2 stretches are compositionally biased toward polar residues: residues 94–117 (VPQS…TSLN) and 162–178 (THEQ…NSVS). The span at 219–231 (SSSSAPLASDQSP) shows a compositional bias: low complexity. Positions 246-264 (LGSNSGLNPRSPNSFSSPL) are enriched in polar residues. Positions 280–289 (SLSPLSNSSS) are enriched in low complexity. Polar residues predominate over residues 290 to 314 (INQVHQNETHGSTISVPNPNLSQMG). A compositionally biased stretch (low complexity) spans 315-329 (PSHSSSVPSNLSPNP). The span at 330 to 348 (AQNENPSTTSIPSINNQPF) shows a compositional bias: polar residues. A helical transmembrane segment spans residues 496–516 (ILLTSIMSVVFLLQTGALAPF). Residues 544–578 (TAQRVVEIPNETQTEDEQDGTNTPDNRADAEEREL) form a disordered region. Phosphothreonine is present on Thr566. Positions 569–578 (NRADAEEREL) are enriched in basic and acidic residues.

It is found in the endoplasmic reticulum membrane. This is an uncharacterized protein from Schizosaccharomyces pombe (strain 972 / ATCC 24843) (Fission yeast).